The sequence spans 71 residues: Small ribosomal subunit protein bS21 (71 aa).

The tract at residues 47-71 (RENATRAKRHAKRVARENARNTRLY) is disordered. Residues 60-71 (VARENARNTRLY) are compositionally biased toward basic and acidic residues.

It belongs to the bacterial ribosomal protein bS21 family.

This Actinobacillus succinogenes (strain ATCC 55618 / DSM 22257 / CCUG 43843 / 130Z) protein is Small ribosomal subunit protein bS21.